The sequence spans 113 residues: Hydrogenase maturation factor HypA (113 aa).

His2 serves as a coordination point for Ni(2+). Zn(2+)-binding residues include Cys73, Cys76, Cys89, and Cys92.

It belongs to the HypA/HybF family.

Its function is as follows. Involved in the maturation of [NiFe] hydrogenases. Required for nickel insertion into the metal center of the hydrogenase. In Chlorobaculum parvum (strain DSM 263 / NCIMB 8327) (Chlorobium vibrioforme subsp. thiosulfatophilum), this protein is Hydrogenase maturation factor HypA.